Reading from the N-terminus, the 140-residue chain is ATP synthase epsilon chain (140 aa).

Belongs to the ATPase epsilon chain family. F-type ATPases have 2 components, CF(1) - the catalytic core - and CF(0) - the membrane proton channel. CF(1) has five subunits: alpha(3), beta(3), gamma(1), delta(1), epsilon(1). CF(0) has three main subunits: a, b and c.

The protein resides in the cell inner membrane. In terms of biological role, produces ATP from ADP in the presence of a proton gradient across the membrane. This Saccharophagus degradans (strain 2-40 / ATCC 43961 / DSM 17024) protein is ATP synthase epsilon chain.